The sequence spans 30 residues: Kalata-B5 (30 aa).

Residues 1–30 constitute a cross-link (cyclopeptide (Gly-Asn)); it reads GTPCGESCVYIPCISGVIGCSCTDKVCYLN. 3 cysteine pairs are disulfide-bonded: Cys-4/Cys-20, Cys-8/Cys-22, and Cys-13/Cys-27.

This is a cyclic peptide.

In terms of biological role, probably participates in a plant defense mechanism. This Oldenlandia affinis protein is Kalata-B5.